We begin with the raw amino-acid sequence, 217 residues long: Translation initiation factor 6 (217 aa).

This sequence belongs to the eIF-6 family.

Functionally, binds to the 50S ribosomal subunit and prevents its association with the 30S ribosomal subunit to form the 70S initiation complex. The polypeptide is Translation initiation factor 6 (Picrophilus torridus (strain ATCC 700027 / DSM 9790 / JCM 10055 / NBRC 100828 / KAW 2/3)).